The sequence spans 439 residues: O-fucosyltransferase 13 (439 aa).

Residues 8 to 28 traverse the membrane as a helical; Signal-anchor for type II membrane protein segment; sequence PLFVFVLTFSLLLVVILLSPS. Residues Asn104 and Asn119 are each glycosylated (N-linked (GlcNAc...) asparagine). Residue 238-240 participates in substrate binding; it reads HLR. N-linked (GlcNAc...) asparagine glycosylation is present at Asn293.

It belongs to the glycosyltransferase GT106 family.

It localises to the membrane. It functions in the pathway glycan metabolism. This chain is O-fucosyltransferase 13, found in Arabidopsis thaliana (Mouse-ear cress).